The sequence spans 409 residues: uncharacterized protein (409 aa).

Residues H36–R50 show a composition bias toward basic and acidic residues. 3 disordered regions span residues H36–S67, I239–I298, and R338–R373. Low complexity predominate over residues P51–S67. Positions V245 to P265 are enriched in basic and acidic residues. Positions L268–K281 are enriched in polar residues. 2 stretches are compositionally biased toward basic and acidic residues: residues N282–D294 and R338–R350.

This is an uncharacterized protein from Homo sapiens (Human).